Reading from the N-terminus, the 382-residue chain is Gas vesicle protein C1 (382 aa).

Residues 1–18 show a composition bias toward basic and acidic residues; it reads MSVTDKRDEMSTARDKFA. The disordered stretch occupies residues 1–21; it reads MSVTDKRDEMSTARDKFAESQ. 7 tandem repeats follow at residues 22-60, 61-92, 93-130, 131-168, 169-200, 201-240, and 241-284. A 7 X approximate tandem repeats region spans residues 22–284; the sequence is QEFESYADEF…VEAEAEVSPD (263 aa). Residues 260-302 show a composition bias toward acidic residues; that stretch reads GAAEAEAEPVEADADVEAEAEVSPDEAGGESAGTEEEETEPAE. The interval 260-382 is disordered; it reads GAAEAEAEPV…DVPLRPDDKT (123 aa). Over residues 303-316 the composition is skewed to low complexity; that stretch reads VETAAPEVEGSPAD. Positions 317 to 336 are enriched in acidic residues; that stretch reads TADEAEDTEAEEETEEEAPE. Residues 365 to 382 show a composition bias toward basic and acidic residues; it reads EYRDEYGEDVPLRPDDKT.

The protein belongs to the halobacterial gas vesicle GvpC family. Forms homodimers, interacts with GvpF1, GvpH1, GvpI1, GvpL1, GvpN1 and GvpO1 via its C-terminus (residues 329-382).

It is found in the gas vesicle. The protein localises to the cytoplasm. Functionally, confers stability, involved in shaping gas vesicles. Gas vesicles are hollow, gas filled proteinaceous nanostructures found in several microbial planktonic microorganisms. They allow positioning of halobacteria at the optimal depth for growth in the poorly aerated, shallow brine pools of their habitat. In terms of biological role, expression of a 9.5 kb p-vac DNA fragment containing 2 divergently transcribed regions (gvpD-gvpE-gvpF-gvpG-gvpH-gvpI-gvpJ-gvpK-gvpL-gvpM and gvpA-gvpC-gvpN-gvpO) allows H.volcanii to produce gas vesicles. A similar region restores gas vesicle production in H.halobium without the p-vac locus, but it still has the c-vac locus. The sequence is that of Gas vesicle protein C1 (gvpC1) from Halobacterium salinarum (strain ATCC 700922 / JCM 11081 / NRC-1) (Halobacterium halobium).